Reading from the N-terminus, the 63-residue chain is Cysteine-rich venom protein 3 (63 aa).

Positions 1-25 (MRKPITLILVVALALVLLATSEVSA) are cleaved as a signal peptide. Intrachain disulfides connect C29/C43, C36/C48, and C42/C58.

As to expression, expressed by the venom gland.

It is found in the secreted. The chain is Cysteine-rich venom protein 3 from Pimpla hypochondriaca (Parasitoid wasp).